Here is an 84-residue protein sequence, read N- to C-terminus: MRNRNLLKFLPGLLICLIVLTSCVPKQKNMPYALTQRSIPQILPLPSEAKQPKPPKECSPTCSEILQQKLSFMLKLLTNATSQE.

An N-terminal signal peptide occupies residues 1–22 (MRNRNLLKFLPGLLICLIVLTS). Cys23 is lipidated: N-palmitoyl cysteine. Cys23 is lipidated: S-diacylglycerol cysteine.

It is found in the cell membrane. This chain is Putative lipoprotein RzoQ (rzoQ), found in Escherichia coli (strain K12).